Here is a 156-residue protein sequence, read N- to C-terminus: Ribosomal RNA large subunit methyltransferase H (156 aa).

Residues Leu73, Gly104, and 123-128 contribute to the S-adenosyl-L-methionine site; that span reads LSRLTL.

This sequence belongs to the RNA methyltransferase RlmH family. As to quaternary structure, homodimer.

The protein resides in the cytoplasm. It carries out the reaction pseudouridine(1915) in 23S rRNA + S-adenosyl-L-methionine = N(3)-methylpseudouridine(1915) in 23S rRNA + S-adenosyl-L-homocysteine + H(+). Its function is as follows. Specifically methylates the pseudouridine at position 1915 (m3Psi1915) in 23S rRNA. The sequence is that of Ribosomal RNA large subunit methyltransferase H from Thiobacillus denitrificans (strain ATCC 25259 / T1).